The chain runs to 1588 residues: MVQLAKVPILGNDIIHVGYNIHDHLVETIIKHCPSSTYVICNDTNLSKVPYYQQLVLEFKASLPEGSRLLTYVVKPGETSKSRETKAQLEDYLLVEGCTRDTVMVAIGGGVIGDMIGFVASTFMRGVRVVQVPTSLLAMVDSSIGGKTAIDTPLGKNFIGAFWQPKFVLVDIKWLETLAKREFINGMAEVIKTACIWNADEFTRLESNASLFLNVVNGAKNVKVTNQLTNEIDEISNTDIEAMLDHTYKLVLESIKVKAEVVSSDERESSLRNLLNFGHSIGHAYEAILTPQALHGECVSIGMVKEAELSRYFGILSPTQVARLSKILVAYGLPVSPDEKWFKELTLHKKTPLDILLKKMSIDKKNEGSKKKVVILESIGKCYGDSAQFVSDEDLRFILTDETLVYPFKDIPADQQKVVIPPGSKSISNRALILAALGEGQCKIKNLLHSDDTKHMLTAVHELKGATISWEDNGETVVVEGHGGSTLSACADPLYLGNAGTASRFLTSLAALVNSTPSQKYIVLTGNARMQQRPIAPLVDSLRANGTKIEYLNNEGSLPIKVYTDSVFKGGRIELAATVSSQYVSSILMCAPYAEEPVTLALVGGKPISKLYVDMTIKMMEKFGINVETSTTEPYTYYIPKGHYINPSEYVIESDASSATYPLAFAAMTGTTVTVPNIGFESLQGDARFARDVLKPMGCKITQTATSTTVSGPPVGTLKPLKHVDMEPMTDAFLTACVVAAISHDSDPNSANTTTIEGIANQRVKECNRILAMATELAKFGVKTTELPDGIQVHGLNSIKDLKVPSDSSGPVGVCTYDDHRVAMSFSLLAGMVNSQNERDEVATPVRILERHCTGKTWPGWWDVLHSELGAKLDGAEPLECTSKKNSKKSVVIIGMRAAGKTTISKWCASALGYKLVDLDELFEQQHNNQSVKQFVVENGWEKFREEETRIFKEVIQNYGDDGYVFSTGGGIVESAESRKALKDFASSGGYVLHLHRDIEETIVFLQSDPSRPAYVEEIREVWNRREGWYKECSNFSFFAPHCSAETEFQALRRSFSKYIATITGVREIEIPSGRSAFVCLTFDDLTEQTENLTPICYGCEAVEVRVDHLANYSADFVSKQLSILRKATDSIPIIFTVRTKKQGGNFPDEEFKTLRELYDIALKNGVEFLDLELTLPTDIQYEVINKRGNTKIIGSHHDFQGLYSWDDAEWENRFNQALTLDVDVVKFVGTAVNFEDNLRLEHFRDTHKNKPLIAVNMTSKGSISRVLNNVLTPVTSDLLPNSAAPGQLTVAQINKMYTSMGGIEPKELFVVGKPIGHSRSPILHNTGYEILGLPHKFDKFETESAQLVKEKLLDGNKNFGGAAVTIPLKLDIMQYMDELTDAAKIIGAVNTVIPLGNKKFKGDNTDWLGIRNALINNGVPEYVGHTAGLVIGAGGTSRAALYALHSLGCKKIFIINRTTSKLKPLIESLPSEFNIIGIESTKSIEEIKEHVGVAVSCVPADKPLDDELLSKLERFLVKGAHAAFVPTLLEAAYKPSVTPVMTISQDKYQWHVVPGSQMLVHQGVAQFEKWTGFKAPFKAIFDAVTKE.

The segment at 1–392 (MVQLAKVPIL…YGDSAQFVSD (392 aa)) is 3-dehydroquinate synthase. NAD(+) contacts are provided by residues 43–45 (DTN), 78–81 (ETSK), 109–111 (GGV), and aspartate 114. Arginine 125 is a binding site for 7-phospho-2-dehydro-3-deoxy-D-arabino-heptonate. Residue 134–135 (TS) coordinates NAD(+). Residues aspartate 141 and lysine 147 each contribute to the 7-phospho-2-dehydro-3-deoxy-D-arabino-heptonate site. Position 156 (lysine 156) interacts with NAD(+). 7-phospho-2-dehydro-3-deoxy-D-arabino-heptonate is bound at residue asparagine 157. NAD(+) is bound by residues 174–177 (WLET) and asparagine 185. Zn(2+) is bound at residue glutamate 189. 7-phospho-2-dehydro-3-deoxy-D-arabino-heptonate contacts are provided by residues 189–192 (EVIK) and lysine 258. Glutamate 268 acts as the Proton acceptor; for 3-dehydroquinate synthase activity in catalysis. Residues 272-276 (RNLLN) and histidine 279 each bind 7-phospho-2-dehydro-3-deoxy-D-arabino-heptonate. A Zn(2+)-binding site is contributed by histidine 279. Histidine 283 acts as the Proton acceptor; for 3-dehydroquinate synthase activity in catalysis. The 7-phospho-2-dehydro-3-deoxy-D-arabino-heptonate site is built by histidine 295 and lysine 364. Histidine 295 lines the Zn(2+) pocket. The EPSP synthase stretch occupies residues 405-871 (VYPFKDIPAD…WDVLHSELGA (467 aa)). The active-site For EPSP synthase activity is the cysteine 853. Residues 890-1080 (SVVIIGMRAA…IPSGRSAFVC (191 aa)) are shikimate kinase. 895–902 (GMRAAGKT) provides a ligand contact to ATP. Residues 1081 to 1293 (LTFDDLTEQT…AAPGQLTVAQ (213 aa)) form a 3-dehydroquinase region. Histidine 1198 serves as the catalytic Proton acceptor; for 3-dehydroquinate dehydratase activity. Lysine 1227 functions as the Schiff-base intermediate with substrate; for 3-dehydroquinate dehydratase activity in the catalytic mechanism. The segment at 1306 to 1588 (PKELFVVGKP…KAIFDAVTKE (283 aa)) is shikimate dehydrogenase.

In the N-terminal section; belongs to the sugar phosphate cyclases superfamily. Dehydroquinate synthase family. This sequence in the 2nd section; belongs to the EPSP synthase family. The protein in the 3rd section; belongs to the shikimate kinase family. It in the 4th section; belongs to the type-I 3-dehydroquinase family. In the C-terminal section; belongs to the shikimate dehydrogenase family. As to quaternary structure, homodimer. It depends on Zn(2+) as a cofactor.

Its subcellular location is the cytoplasm. It catalyses the reaction 7-phospho-2-dehydro-3-deoxy-D-arabino-heptonate = 3-dehydroquinate + phosphate. It carries out the reaction 3-dehydroquinate = 3-dehydroshikimate + H2O. The enzyme catalyses shikimate + NADP(+) = 3-dehydroshikimate + NADPH + H(+). The catalysed reaction is shikimate + ATP = 3-phosphoshikimate + ADP + H(+). It catalyses the reaction 3-phosphoshikimate + phosphoenolpyruvate = 5-O-(1-carboxyvinyl)-3-phosphoshikimate + phosphate. It functions in the pathway metabolic intermediate biosynthesis; chorismate biosynthesis; chorismate from D-erythrose 4-phosphate and phosphoenolpyruvate: step 2/7. It participates in metabolic intermediate biosynthesis; chorismate biosynthesis; chorismate from D-erythrose 4-phosphate and phosphoenolpyruvate: step 3/7. The protein operates within metabolic intermediate biosynthesis; chorismate biosynthesis; chorismate from D-erythrose 4-phosphate and phosphoenolpyruvate: step 4/7. Its pathway is metabolic intermediate biosynthesis; chorismate biosynthesis; chorismate from D-erythrose 4-phosphate and phosphoenolpyruvate: step 5/7. It functions in the pathway metabolic intermediate biosynthesis; chorismate biosynthesis; chorismate from D-erythrose 4-phosphate and phosphoenolpyruvate: step 6/7. The AROM polypeptide catalyzes 5 consecutive enzymatic reactions in prechorismate polyaromatic amino acid biosynthesis. The polypeptide is Pentafunctional AROM polypeptide (Saccharomyces cerevisiae (strain YJM789) (Baker's yeast)).